We begin with the raw amino-acid sequence, 120 residues long: NAD(P)H-quinone oxidoreductase subunit 3, chloroplastic (120 aa).

A run of 3 helical transmembrane segments spans residues isoleucine 9–glycine 29, methionine 64–methionine 84, and isoleucine 88–leucine 108.

It belongs to the complex I subunit 3 family. In terms of assembly, NDH is composed of at least 16 different subunits, 5 of which are encoded in the nucleus.

It localises to the plastid. Its subcellular location is the chloroplast thylakoid membrane. It catalyses the reaction a plastoquinone + NADH + (n+1) H(+)(in) = a plastoquinol + NAD(+) + n H(+)(out). The catalysed reaction is a plastoquinone + NADPH + (n+1) H(+)(in) = a plastoquinol + NADP(+) + n H(+)(out). NDH shuttles electrons from NAD(P)H:plastoquinone, via FMN and iron-sulfur (Fe-S) centers, to quinones in the photosynthetic chain and possibly in a chloroplast respiratory chain. The immediate electron acceptor for the enzyme in this species is believed to be plastoquinone. Couples the redox reaction to proton translocation, and thus conserves the redox energy in a proton gradient. The chain is NAD(P)H-quinone oxidoreductase subunit 3, chloroplastic from Spinacia oleracea (Spinach).